The sequence spans 341 residues: UDP-3-O-acylglucosamine N-acyltransferase (341 aa).

The active-site Proton acceptor is the His-242.

This sequence belongs to the transferase hexapeptide repeat family. LpxD subfamily. As to quaternary structure, homotrimer.

The catalysed reaction is a UDP-3-O-[(3R)-3-hydroxyacyl]-alpha-D-glucosamine + a (3R)-hydroxyacyl-[ACP] = a UDP-2-N,3-O-bis[(3R)-3-hydroxyacyl]-alpha-D-glucosamine + holo-[ACP] + H(+). It functions in the pathway bacterial outer membrane biogenesis; LPS lipid A biosynthesis. Catalyzes the N-acylation of UDP-3-O-acylglucosamine using 3-hydroxyacyl-ACP as the acyl donor. Is involved in the biosynthesis of lipid A, a phosphorylated glycolipid that anchors the lipopolysaccharide to the outer membrane of the cell. This is UDP-3-O-acylglucosamine N-acyltransferase from Haemophilus influenzae (strain 86-028NP).